The following is a 208-amino-acid chain: A-type ATP synthase subunit E (208 aa).

The tract at residues 37–57 (DAEKTAEAEKNKILDNGKKQS) is disordered.

It belongs to the V-ATPase E subunit family. Has multiple subunits with at least A(3), B(3), C, D, E, F, H, I and proteolipid K(x).

It is found in the cell membrane. Functionally, component of the A-type ATP synthase that produces ATP from ADP in the presence of a proton gradient across the membrane. The chain is A-type ATP synthase subunit E from Methanobrevibacter smithii (strain ATCC 35061 / DSM 861 / OCM 144 / PS).